We begin with the raw amino-acid sequence, 249 residues long: 2,3-bisphosphoglycerate-dependent phosphoglycerate mutase (249 aa).

Substrate is bound by residues 8–15, 21–22, Arg-60, 87–90, Lys-98, 114–115, and 183–184; these read RHGESTWN, TG, ERHY, RR, and GN. Residue His-9 is the Tele-phosphohistidine intermediate of the active site. Glu-87 serves as the catalytic Proton donor/acceptor.

It belongs to the phosphoglycerate mutase family. BPG-dependent PGAM subfamily. Homodimer.

The catalysed reaction is (2R)-2-phosphoglycerate = (2R)-3-phosphoglycerate. Its pathway is carbohydrate degradation; glycolysis; pyruvate from D-glyceraldehyde 3-phosphate: step 3/5. Catalyzes the interconversion of 2-phosphoglycerate and 3-phosphoglycerate. The chain is 2,3-bisphosphoglycerate-dependent phosphoglycerate mutase from Burkholderia mallei (strain NCTC 10247).